A 62-amino-acid chain; its full sequence is Large ribosomal subunit protein eL37 (62 aa).

Positions 20, 23, 35, and 38 each coordinate Zn(2+). The C4-type zinc finger occupies 20 to 38 (CRRCGRVSYNVKKGYCAAC).

The protein belongs to the eukaryotic ribosomal protein eL37 family. Part of the 50S ribosomal subunit. Zn(2+) serves as cofactor.

Functionally, binds to the 23S rRNA. The polypeptide is Large ribosomal subunit protein eL37 (Pyrococcus furiosus (strain ATCC 43587 / DSM 3638 / JCM 8422 / Vc1)).